The primary structure comprises 364 residues: Fructose-bisphosphate aldolase B (364 aa).

Ala-2 is modified (N-acetylalanine). Position 13 is an N6-succinyllysine (Lys-13). Ser-36 carries the phosphoserine modification. Thr-39 is modified (phosphothreonine). Arg-43 contributes to the beta-D-fructose 1,6-bisphosphate binding site. Ser-89 carries the phosphoserine modification. At Thr-119 the chain carries Phosphothreonine. An N6-succinyllysine modification is found at Lys-121. Ser-132 bears the Phosphoserine mark. Residue Glu-188 is the Proton acceptor of the active site. Lys-230 functions as the Schiff-base intermediate with dihydroxyacetone-P in the catalytic mechanism. Ser-272, Ser-276, Ser-299, and Ser-301 each carry phosphoserine. 272–274 (SGG) serves as a coordination point for beta-D-fructose 1,6-bisphosphate. Position 304 (Arg-304) interacts with beta-D-fructose 1,6-bisphosphate. The residue at position 309 (Ser-309) is a Phosphoserine. At Lys-317 the chain carries N6-succinyllysine.

This sequence belongs to the class I fructose-bisphosphate aldolase family. As to quaternary structure, homotetramer. Interacts with BBS1, BBS2, BBS4 and BBS7. Forms a ternary complex with G6PD and TP53; this interaction is direct.

It is found in the cytoplasm. The protein resides in the cytosol. Its subcellular location is the cytoskeleton. The protein localises to the microtubule organizing center. It localises to the centrosome. It is found in the centriolar satellite. The enzyme catalyses beta-D-fructose 1,6-bisphosphate = D-glyceraldehyde 3-phosphate + dihydroxyacetone phosphate. The catalysed reaction is beta-D-fructose 1-phosphate = D-glyceraldehyde + dihydroxyacetone phosphate. It participates in carbohydrate degradation; glycolysis; D-glyceraldehyde 3-phosphate and glycerone phosphate from D-glucose: step 4/4. It functions in the pathway carbohydrate biosynthesis; gluconeogenesis. The protein operates within carbohydrate metabolism; fructose metabolism. In terms of biological role, catalyzes the aldol cleavage of fructose 1,6-biphosphate to form two triosephosphates dihydroxyacetone phosphate and D-glyceraldehyde 3-phosphate in glycolysis as well as the reverse stereospecific aldol addition reaction in gluconeogenesis. In fructolysis, metabolizes fructose 1-phosphate derived from the phosphorylation of dietary fructose by fructokinase into dihydroxyacetone phosphate and D-glyceraldehyde. Acts as an adapter independently of its enzymatic activity, exerts a tumor suppressor role by stabilizing the ternary complex with G6PD and TP53 to inhibit G6PD activity and keep oxidative pentose phosphate metabolism in check. This is Fructose-bisphosphate aldolase B from Homo sapiens (Human).